The chain runs to 67 residues: Bombesin (67 aa).

The signal sequence occupies residues 1-30 (MSLLPAVKVLPLGYLGIVLVFSLILRSAMV). The propeptide occupies 31–49 (DFIQDAGKLERIDTYKREA). Gln-50 is subject to Pyrrolidone carboxylic acid. The residue at position 64 (Met-64) is a Methionine amide.

It belongs to the bombesin/neuromedin-B/ranatensin family. In terms of tissue distribution, expressed by the skin dorsal glands.

It is found in the secreted. Functionally, stimulates smooth muscle contraction in isolated rat stomach strip. This chain is Bombesin, found in Sanguirana varians (Palawan frog).